The chain runs to 315 residues: Protein OPG185 (315 aa).

A signal peptide spans Met1–Ser16. In terms of domain architecture, Ig-like V-type spans Thr17–Glu121. At Thr17 to Glu279 the chain is on the virion surface side. An intrachain disulfide couples Cys34 to Cys103. 4 N-linked (GlcNAc...) asparagine; by host glycosylation sites follow: Asn37, Asn69, Asn112, and Asn161. A compositionally biased stretch (polar residues) spans Ile192–Ser202. Residues Ile192 to Lys214 form a disordered region. Asn254 is a glycosylation site (N-linked (GlcNAc...) asparagine; by host). The helical transmembrane segment at Ile280–Asn303 threads the bilayer. Residues Lys304–Val315 lie on the Intravirion side of the membrane.

Belongs to the orthopoxvirus OPG185 family. As to quaternary structure, heterodimerizes with OPG040. The heterodimer OPG185-OPG040 interacts with components of the entry fusion complex OPG143 and OPG094. Heterodimer with C3/VPC protein; disulfide-linked. Post-translationally, glycosylated; contains phosphate and sulfate-substituted glycans. O-glycosylation is required for hemagglutination and hemadsorption activities of infected cell membranes.

The protein localises to the virion membrane. Its subcellular location is the host membrane. Its function is as follows. Prevents cell to cell fusion by interacting with and directing the viral OPG040 protein on the host plasma membrane. The OPG185-OPG040 complex associates with components of the entry fusion complex (EFC) presumably to avoid superinfection and syncytium formation. Via its interaction with C3/VCP protein, protects the infected cell and probably also the extracellular enveloped virus from complement attack. In Vaccinia virus (strain Tian Tan) (VACV), this protein is Protein OPG185 (OPG185).